The following is a 157-amino-acid chain: MKEMDERKQEGELHLLGGSTVYKQDYAPEVLEAFTNKHQGNDYWVRFNCPEFTSLCPITGQPDFATIHIDYIPDVKMVESKSLKLYLFSFRNHGAFHEDCVNIIMKDLIKLMDPKYIEITGIFTPRGGISIYPYCNYGRPNTKFEQLAEKRLFDHNQ.

Cys56 acts as the Thioimide intermediate in catalysis. The Proton donor role is filled by Asp63. Substrate is bound by residues 78 to 80 and 97 to 98; these read VES and HE.

It belongs to the GTP cyclohydrolase I family. QueF type 1 subfamily.

Its subcellular location is the cytoplasm. The enzyme catalyses 7-aminomethyl-7-carbaguanine + 2 NADP(+) = 7-cyano-7-deazaguanine + 2 NADPH + 3 H(+). The protein operates within tRNA modification; tRNA-queuosine biosynthesis. Its function is as follows. Catalyzes the NADPH-dependent reduction of 7-cyano-7-deazaguanine (preQ0) to 7-aminomethyl-7-deazaguanine (preQ1). The sequence is that of NADPH-dependent 7-cyano-7-deazaguanine reductase from Parabacteroides distasonis (strain ATCC 8503 / DSM 20701 / CIP 104284 / JCM 5825 / NCTC 11152).